Reading from the N-terminus, the 350-residue chain is Dihydroorotase (350 aa).

Positions 17 and 19 each coordinate Zn(2+). Residues histidine 19–arginine 21 and asparagine 45 each bind substrate. The Zn(2+) site is built by lysine 103, histidine 140, and histidine 178. Lysine 103 carries the post-translational modification N6-carboxylysine. A substrate-binding site is contributed by histidine 140. Leucine 224 contributes to the substrate binding site. A Zn(2+)-binding site is contributed by aspartate 252. Residue aspartate 252 is part of the active site. 2 residues coordinate substrate: histidine 256 and alanine 268.

The protein belongs to the metallo-dependent hydrolases superfamily. DHOase family. Class II DHOase subfamily. In terms of assembly, homodimer. The cofactor is Zn(2+).

The catalysed reaction is (S)-dihydroorotate + H2O = N-carbamoyl-L-aspartate + H(+). Its pathway is pyrimidine metabolism; UMP biosynthesis via de novo pathway; (S)-dihydroorotate from bicarbonate: step 3/3. In terms of biological role, catalyzes the reversible cyclization of carbamoyl aspartate to dihydroorotate. This is Dihydroorotase from Buchnera aphidicola subsp. Acyrthosiphon pisum (strain 5A).